A 172-amino-acid chain; its full sequence is Shikimate kinase (172 aa).

Residue 8-15 (GARASGKT) participates in ATP binding.

This sequence belongs to the shikimate kinase family.

It localises to the cytoplasm. It carries out the reaction shikimate + ATP = 3-phosphoshikimate + ADP + H(+). The protein operates within metabolic intermediate biosynthesis; chorismate biosynthesis; chorismate from D-erythrose 4-phosphate and phosphoenolpyruvate: step 5/7. The sequence is that of Shikimate kinase from Oleidesulfovibrio alaskensis (strain ATCC BAA-1058 / DSM 17464 / G20) (Desulfovibrio alaskensis).